Here is a 189-residue protein sequence, read N- to C-terminus: Glutathione-dependent formaldehyde-activating enzyme (189 aa).

The CENP-V/GFA domain occupies 20 to 167 (FAGGTLVCKC…LKELGLEPYD (148 aa)). Zn(2+) contacts are provided by Cys27, Cys29, Cys48, Cys50, Cys53, Cys95, and Cys98.

This sequence belongs to the Gfa family. It depends on Zn(2+) as a cofactor.

It carries out the reaction S-(hydroxymethyl)glutathione = glutathione + formaldehyde. Its pathway is one-carbon metabolism; formaldehyde degradation; formate from formaldehyde (glutathione route): step 1/3. Functionally, catalyzes the condensation of formaldehyde and glutathione to S-hydroxymethylglutathione. In Rhodopseudomonas palustris (strain BisA53), this protein is Glutathione-dependent formaldehyde-activating enzyme.